We begin with the raw amino-acid sequence, 442 residues long: Serum response factor-binding protein 1 (442 aa).

Coiled coils occupy residues 55–77 and 118–140; these read EDAL…AMKE and LLKR…RQNA. 2 disordered regions span residues 137 to 336 and 358 to 442; these read RQNA…LETH and FHSL…TFDD. 2 stretches are compositionally biased toward basic and acidic residues: residues 149 to 159 and 167 to 188; these read ASKESQCEDIP and ESQH…DPTT. A Glycyl lysine isopeptide (Lys-Gly) (interchain with G-Cter in SUMO2) cross-link involves residue Lys-202. Ser-215 carries the post-translational modification Phosphoserine. Residues 237-247 show a composition bias toward polar residues; it reads GNHSQGKASTR. The segment covering 266–278 has biased composition (acidic residues); it reads VSEEEKEYFDDST. Residues Ser-277, Ser-292, and Ser-294 each carry the phosphoserine modification. Residue Lys-329 forms a Glycyl lysine isopeptide (Lys-Gly) (interchain with G-Cter in SUMO2) linkage. The residue at position 362 (Ser-362) is a Phosphoserine. A compositionally biased stretch (basic and acidic residues) spans 367–382; the sequence is SRRDPREQAPKNKAPD.

In terms of assembly, interacts with SRF. Forms complexes with SRF and SRF cofactors ARID2, MYOCD and NKX2-5. Interacts with the N-terminus of SLC2A4.

It is found in the cytoplasm. It localises to the perinuclear region. May be involved in regulating transcriptional activation of cardiac genes during the aging process. May play a role in biosynthesis and/or processing of SLC2A4 in adipose cells. The chain is Serum response factor-binding protein 1 from Rattus norvegicus (Rat).